The following is a 636-amino-acid chain: Dehydrogenase ARMGADRAFT_1018426 (636 aa).

A signal peptide spans 1 to 19 (MPALTYLLLAAIGASTVHS). FAD is bound by residues 49–50 (TA) and 70–71 (EG). Asn99 carries an N-linked (GlcNAc...) asparagine glycan. FAD contacts are provided by residues Trp104 and 134–137 (NGLT). Residue Asn253 is glycosylated (N-linked (GlcNAc...) asparagine). FAD is bound at residue Val280. N-linked (GlcNAc...) asparagine glycosylation is found at Asn333, Asn380, Asn394, and Asn498. His570 (proton acceptor) is an active-site residue. Residues Ala603 and 614–615 (PS) each bind FAD.

This sequence belongs to the GMC oxidoreductase family. FAD serves as cofactor.

It functions in the pathway secondary metabolite biosynthesis. In terms of biological role, dehydrogenase, part of the gene cluster that mediates the biosynthesis of melleolides, a range of antifungal and phytotoxic polyketide derivatives composed of an orsellinic acid (OA) moiety esterified to various sesquiterpene alcohols. The first step in melleolides biosynthesis is performed by the delta(6)-protoilludene synthase PRO1 which catalyzes the cyclization of farnesyl diphosphate to protoilludene. The orsellinic acid synthase armB produces OA by condensing acetyl-CoA with 3 malonyl-CoA units in a three-round chain elongation reaction folowed by a C2-C7 ring closure. ArmB further catalyzes the trans-esterification of OA to the various sesquiterpene alcohols resulting from the hydroxylation of protoilludene. The melleolides cluster also includes 5 cytochrome P450 monooxygenases, 4 NAD(+)-dependent oxidoreductases, one flavin-dependent oxidoreductase, and one O-methyltransferase. The cytochrome P450 monooxygenases may be involved in protoilludene hydroxylation to elaborate melleolides with multiple alcohol groups, such as melleolide D, which carries alcohol functionalities at C-4, C-5, C-10, and C-13. The role of the NAD(+)-dependent enzymes remains unknown. Numerous melleolides, including arnamial, show 5'-O-methylation of the aromatic moiety which may be catalyzed by the methyltransferase encoded in the cluster. The flavin-dependent oxidoreductase might represent the dehydrogenase yielding the aldehyde in position 1 of arnamial and other melleolides. Finally, several halogenase localized outside of the cluster, are able to catalyze the transfer of a single chlorine atom to the melleolide backbone, resulting in a 6'-chloromelleolide product. This is Dehydrogenase ARMGADRAFT_1018426 from Armillaria gallica (Bulbous honey fungus).